The following is a 91-amino-acid chain: ATP-dependent Clp protease adapter protein ClpS (91 aa).

It belongs to the ClpS family. As to quaternary structure, binds to the N-terminal domain of the chaperone ClpA.

Its function is as follows. Involved in the modulation of the specificity of the ClpAP-mediated ATP-dependent protein degradation. This is ATP-dependent Clp protease adapter protein ClpS from Synechococcus sp. (strain ATCC 27144 / PCC 6301 / SAUG 1402/1) (Anacystis nidulans).